We begin with the raw amino-acid sequence, 400 residues long: Argininosuccinate synthase (400 aa).

ATP is bound by residues 10–18 (AYSGGVDTS) and A38. Y89 serves as a coordination point for L-citrulline. Position 119 (G119) interacts with ATP. Residues T121, N125, and D126 each coordinate L-aspartate. N125 is a binding site for L-citrulline. Positions 129, 177, 186, 262, and 274 each coordinate L-citrulline.

It belongs to the argininosuccinate synthase family. Type 1 subfamily. Homotetramer.

The protein localises to the cytoplasm. It carries out the reaction L-citrulline + L-aspartate + ATP = 2-(N(omega)-L-arginino)succinate + AMP + diphosphate + H(+). It functions in the pathway amino-acid biosynthesis; L-arginine biosynthesis; L-arginine from L-ornithine and carbamoyl phosphate: step 2/3. The protein is Argininosuccinate synthase of Crocosphaera subtropica (strain ATCC 51142 / BH68) (Cyanothece sp. (strain ATCC 51142)).